The sequence spans 118 residues: Large ribosomal subunit protein bL20 (118 aa).

It belongs to the bacterial ribosomal protein bL20 family.

Its function is as follows. Binds directly to 23S ribosomal RNA and is necessary for the in vitro assembly process of the 50S ribosomal subunit. It is not involved in the protein synthesizing functions of that subunit. This chain is Large ribosomal subunit protein bL20, found in Phenylobacterium zucineum (strain HLK1).